A 129-amino-acid chain; its full sequence is MKVVKLEDVIGTEQEVKGENWTSRRLLLKKDGMGYSVHDTIIKAGTETHIWYQNHLEAVYCIEGEGEVETVKDGKVWPIKANEIYALDEHDEHLLRAKTDMRMVCVFNPPITGKETHDENGVYPLVDDE.

The protein belongs to the ectoine synthase family.

The catalysed reaction is (2S)-4-acetamido-2-aminobutanoate = L-ectoine + H2O. It functions in the pathway amine and polyamine biosynthesis; ectoine biosynthesis; L-ectoine from L-aspartate 4-semialdehyde: step 3/3. Its function is as follows. Catalyzes the circularization of gamma-N-acetyl-alpha,gamma-diaminobutyric acid (ADABA) to ectoine (1,4,5,6-tetrahydro-2-methyl-4-pyrimidine carboxylic acid), which is an excellent osmoprotectant. The sequence is that of L-ectoine synthase from Halalkalibacterium halodurans (strain ATCC BAA-125 / DSM 18197 / FERM 7344 / JCM 9153 / C-125) (Bacillus halodurans).